A 242-amino-acid chain; its full sequence is MSMMCYTLIIAFLIGIWAAPKSEDNVPLGSPATSDLSDTSCAQTHEGLKTSRNTDQRHPAPKKAEDQELGSAANIIVDPKLFQKRRFQSPRVLFSTQPPPLSRDEQSVEFLDNEDTLNRNIRAKRENHPVHNQGEHSVCDSVSDWVIKTTATDIHGNMVTVMGDINFTNEVYKQYFFETKCRNPNPVPSGCRGIDSKVWNSYCTTTQTFVKALTMEGSRASWRFIRIDTACVCVISRKTENF.

A signal peptide spans 1 to 18 (MSMMCYTLIIAFLIGIWA). A propeptide spanning residues 19–125 (APKSEDNVPL…TLNRNIRAKR (107 aa)) is cleaved from the precursor. Positions 47–66 (GLKTSRNTDQRHPAPKKAED) are enriched in basic and acidic residues. Positions 47 to 70 (GLKTSRNTDQRHPAPKKAEDQELG) are disordered. 3 disulfide bridges follow: Cys139–Cys203, Cys181–Cys231, and Cys191–Cys233. Residue Asn166 is glycosylated (N-linked (GlcNAc...) asparagine).

This sequence belongs to the NGF-beta family. As to quaternary structure, homodimer; non-covalently linked. In terms of tissue distribution, expressed by the venom gland.

Its subcellular location is the secreted. Its function is as follows. Nerve growth factor is important for the development and maintenance of the sympathetic and sensory nervous systems. It stimulates division and differentiation of sympathetic and embryonic sensory neurons as well as basal forebrain cholinergic neurons in the brain. Its relevance in the snake venom is not clear. However, it has been shown to inhibit metalloproteinase-dependent proteolysis of platelet glycoprotein Ib alpha, suggesting a metalloproteinase inhibition to prevent metalloprotease autodigestion and/or protection against prey proteases. Binds a lipid between the two protein chains in the homodimer. The lipid-bound form promotes histamine relase from mouse mast cells, contrary to the lipid-free form. The chain is Venom nerve growth factor from Drysdalia coronoides (White-lipped snake).